The following is a 321-amino-acid chain: Probable arabinan endo-1,5-alpha-L-arabinosidase C (321 aa).

The signal sequence occupies residues 1–18 (MYLYTLILLFLASANVNA). D33 functions as the Proton acceptor in the catalytic mechanism. N192 carries N-linked (GlcNAc...) asparagine glycosylation. E200 functions as the Proton donor in the catalytic mechanism. The N-linked (GlcNAc...) asparagine glycan is linked to N224.

Belongs to the glycosyl hydrolase 43 family.

The protein resides in the secreted. The enzyme catalyses Endohydrolysis of (1-&gt;5)-alpha-arabinofuranosidic linkages in (1-&gt;5)-arabinans.. It participates in glycan metabolism; L-arabinan degradation. In terms of biological role, endo-1,5-alpha-L-arabinanase involved in degradation of pectin. Its preferred substrate is linear 1,5-alpha-L-arabinan. The chain is Probable arabinan endo-1,5-alpha-L-arabinosidase C (abnC) from Aspergillus fumigatus (strain CBS 144.89 / FGSC A1163 / CEA10) (Neosartorya fumigata).